A 206-amino-acid chain; its full sequence is Large ribosomal subunit protein uL4 (206 aa).

Residues 43 to 78 (NQRQGTHDTKTRAEVRGGGRKPWRQKGTGRARAGSS) form a disordered region. Basic and acidic residues predominate over residues 47–59 (GTHDTKTRAEVRG). The segment covering 60-71 (GGRKPWRQKGTG) has biased composition (basic residues).

The protein belongs to the universal ribosomal protein uL4 family. Part of the 50S ribosomal subunit.

One of the primary rRNA binding proteins, this protein initially binds near the 5'-end of the 23S rRNA. It is important during the early stages of 50S assembly. It makes multiple contacts with different domains of the 23S rRNA in the assembled 50S subunit and ribosome. Its function is as follows. Forms part of the polypeptide exit tunnel. In Desulforamulus reducens (strain ATCC BAA-1160 / DSM 100696 / MI-1) (Desulfotomaculum reducens), this protein is Large ribosomal subunit protein uL4.